The following is a 253-amino-acid chain: Small ribosomal subunit protein uS2 (253 aa).

It belongs to the universal ribosomal protein uS2 family.

The protein is Small ribosomal subunit protein uS2 of Chlorobium luteolum (strain DSM 273 / BCRC 81028 / 2530) (Pelodictyon luteolum).